The following is a 59-amino-acid chain: Large ribosomal subunit protein bL32 (59 aa).

The interval Met-1–Asp-59 is disordered. Composition is skewed to basic residues over residues Ser-9–His-19 and Arg-49–Asp-59.

This sequence belongs to the bacterial ribosomal protein bL32 family.

The polypeptide is Large ribosomal subunit protein bL32 (Cupriavidus necator (strain ATCC 17699 / DSM 428 / KCTC 22496 / NCIMB 10442 / H16 / Stanier 337) (Ralstonia eutropha)).